The following is a 258-amino-acid chain: uncharacterized protein (258 aa).

This is an uncharacterized protein from Streptococcus pneumoniae serotype 4 (strain ATCC BAA-334 / TIGR4).